Consider the following 411-residue polypeptide: Tyrosine--tRNA ligase (411 aa).

An L-tyrosine-binding site is contributed by tyrosine 34. Positions 39–48 match the 'HIGH' region motif; sequence CTATSLHIGS. L-tyrosine contacts are provided by tyrosine 171 and glutamine 175. A 'KMSKS' region motif is present at residues 231–235; it reads KMGKT. An ATP-binding site is contributed by lysine 234. The region spanning 345-411 is the S4 RNA-binding domain; that stretch reads ISAYELFYEA…GKKRHILVRV (67 aa).

This sequence belongs to the class-I aminoacyl-tRNA synthetase family. TyrS type 1 subfamily. As to quaternary structure, homodimer.

It localises to the cytoplasm. The enzyme catalyses tRNA(Tyr) + L-tyrosine + ATP = L-tyrosyl-tRNA(Tyr) + AMP + diphosphate + H(+). Its function is as follows. Catalyzes the attachment of tyrosine to tRNA(Tyr) in a two-step reaction: tyrosine is first activated by ATP to form Tyr-AMP and then transferred to the acceptor end of tRNA(Tyr). This is Tyrosine--tRNA ligase from Rickettsia rickettsii (strain Sheila Smith).